The following is a 477-amino-acid chain: Bifunctional protein HldE (477 aa).

The ribokinase stretch occupies residues 1 to 318 (MKVTLPEFER…ENAVRGRADT (318 aa)). Lys179 carries the N6-acetyllysine modification. 195 to 198 (NLSE) lines the ATP pocket. Asp264 is an active-site residue. The segment at 344 to 477 (MTNGVFDILH…IKKIQQDKKG (134 aa)) is cytidylyltransferase.

This sequence in the N-terminal section; belongs to the carbohydrate kinase PfkB family. In the C-terminal section; belongs to the cytidylyltransferase family. Homodimer.

It catalyses the reaction D-glycero-beta-D-manno-heptose 7-phosphate + ATP = D-glycero-beta-D-manno-heptose 1,7-bisphosphate + ADP + H(+). The enzyme catalyses D-glycero-beta-D-manno-heptose 1-phosphate + ATP + H(+) = ADP-D-glycero-beta-D-manno-heptose + diphosphate. Its pathway is nucleotide-sugar biosynthesis; ADP-L-glycero-beta-D-manno-heptose biosynthesis; ADP-L-glycero-beta-D-manno-heptose from D-glycero-beta-D-manno-heptose 7-phosphate: step 1/4. The protein operates within nucleotide-sugar biosynthesis; ADP-L-glycero-beta-D-manno-heptose biosynthesis; ADP-L-glycero-beta-D-manno-heptose from D-glycero-beta-D-manno-heptose 7-phosphate: step 3/4. In terms of biological role, catalyzes the phosphorylation of D-glycero-D-manno-heptose 7-phosphate at the C-1 position to selectively form D-glycero-beta-D-manno-heptose-1,7-bisphosphate. Catalyzes the ADP transfer from ATP to D-glycero-beta-D-manno-heptose 1-phosphate, yielding ADP-D-glycero-beta-D-manno-heptose. This Escherichia fergusonii (strain ATCC 35469 / DSM 13698 / CCUG 18766 / IAM 14443 / JCM 21226 / LMG 7866 / NBRC 102419 / NCTC 12128 / CDC 0568-73) protein is Bifunctional protein HldE.